Here is a 210-residue protein sequence, read N- to C-terminus: 3-hexulose-6-phosphate synthase 1 (210 aa).

Belongs to the HPS/KGPDC family. HPS subfamily.

The enzyme catalyses D-ribulose 5-phosphate + formaldehyde = D-arabino-hex-3-ulose 6-phosphate. It functions in the pathway one-carbon metabolism; formaldehyde assimilation via RuMP pathway; D-fructose 6-phosphate from D-ribulose 5-phosphate and formaldehyde: step 1/2. Functionally, catalyzes the condensation of ribulose 5-phosphate with formaldehyde to form 3-hexulose 6-phosphate. This chain is 3-hexulose-6-phosphate synthase 1, found in Staphylococcus saprophyticus subsp. saprophyticus (strain ATCC 15305 / DSM 20229 / NCIMB 8711 / NCTC 7292 / S-41).